The sequence spans 348 residues: DnaJ homolog subfamily B member 5 (348 aa).

The 65-residue stretch at 4–68 folds into the J domain; sequence DYYKILGIPS…KKRSLYDQYG (65 aa).

The polypeptide is DnaJ homolog subfamily B member 5 (Dnajb5) (Mus musculus (Mouse)).